Here is a 697-residue protein sequence, read N- to C-terminus: MFKLFTARKHDNIWDFDGGIHPPEMKLQSSRVPMRIATLPEQLIVPLQQHLGPEGELRVSTGERVLKGQPLTVGRGRTVPVHAPTSGVITAIAPHTTAHPSGLAELCVHITPDGEDRWREQQPWADYSLRDKTALLERIHQAGIAGLGGAGFPTASKLQGGLNSVTTLIINAAECEPYITADDRLMQEHASEVVLGTQILMYLLQPQQVLIGIEDNKPEAIAALQHALRGQDEIQLRVIPTKYPSGGAKQLTKILTGKEVPFGKHSSSIGVLMQNVGTVVAIKRAIIDDEPLIERVVTLTGDALSKPGNFWARIGTPVLHLLKLAGFTPQNQPMVIMGGPLMGFTLSSLDVPIVKISNCILAPTEAEMGLSEPEQSCIRCGLCVDACPAGLLPQQLYWFSRGEEHEKARNHNLFDCIECGACAYVCPSNIPLVQYYRQEKAEIRTLDQEAERAAQAKARFEAKQARLEREKIARELRHKQAAVKLTDVDQQTVEAAVSRLARETNNTDSTISVTLGQPPDNSAVIAAREARKAQARARQVEKKLAAAEPETDAIDPRQAAVAAAIARVKAKKAAQAQLESEPVKSESEAPEEDPRKAAVAAAIARVKAKKAAQAQLESEPVKSESEAPEEDPRKAAVAAAIARVKAKKAAQAQLESEPVKSESEAPEEDPRKAAVAAAIARVKAKKAAQSASAVNPD.

2 consecutive 4Fe-4S ferredoxin-type domains span residues 366-397 and 407-436; these read AEMG…QQLY and KARN…VQYY. C377, C380, C383, C387, C416, C419, C422, and C426 together coordinate [4Fe-4S] cluster. The disordered stretch occupies residues 576–674; the sequence is AQLESEPVKS…APEEDPRKAA (99 aa). The segment covering 581 to 596 has biased composition (basic and acidic residues); it reads EPVKSESEAPEEDPRK. Over residues 597–615 the composition is skewed to low complexity; sequence AAVAAAIARVKAKKAAQAQ. Over residues 619-634 the composition is skewed to basic and acidic residues; sequence EPVKSESEAPEEDPRK. Positions 635-653 are enriched in low complexity; the sequence is AAVAAAIARVKAKKAAQAQ. Residues 657–672 show a composition bias toward basic and acidic residues; sequence EPVKSESEAPEEDPRK.

This sequence belongs to the 4Fe4S bacterial-type ferredoxin family. RnfC subfamily. The complex is composed of six subunits: RnfA, RnfB, RnfC, RnfD, RnfE and RnfG. [4Fe-4S] cluster is required as a cofactor.

The protein resides in the cell inner membrane. Its function is as follows. Part of a membrane-bound complex that couples electron transfer with translocation of ions across the membrane. This chain is Ion-translocating oxidoreductase complex subunit C, found in Yersinia enterocolitica serotype O:8 / biotype 1B (strain NCTC 13174 / 8081).